We begin with the raw amino-acid sequence, 380 residues long: Cytochrome b (380 aa).

The next 4 membrane-spanning stretches (helical) occupy residues 34 to 54, 78 to 99, 114 to 134, and 179 to 199; these read FGSL…LLAM, WLIR…FLHI, WNTG…GYVL, and FFAL…IHLT. His-84 and His-98 together coordinate heme b. Heme b-binding residues include His-183 and His-197. His-202 is a binding site for a ubiquinone. Transmembrane regions (helical) follow at residues 227–247, 289–309, 321–341, and 348–368; these read IKDI…TLFS, LGGV…PFLH, LSQT…WIGS, and FIII…ILFP.

Belongs to the cytochrome b family. As to quaternary structure, the cytochrome bc1 complex contains 11 subunits: 3 respiratory subunits (MT-CYB, CYC1 and UQCRFS1), 2 core proteins (UQCRC1 and UQCRC2) and 6 low-molecular weight proteins (UQCRH/QCR6, UQCRB/QCR7, UQCRQ/QCR8, UQCR10/QCR9, UQCR11/QCR10 and a cleavage product of UQCRFS1). This cytochrome bc1 complex then forms a dimer. Requires heme b as cofactor.

It is found in the mitochondrion inner membrane. Functionally, component of the ubiquinol-cytochrome c reductase complex (complex III or cytochrome b-c1 complex) that is part of the mitochondrial respiratory chain. The b-c1 complex mediates electron transfer from ubiquinol to cytochrome c. Contributes to the generation of a proton gradient across the mitochondrial membrane that is then used for ATP synthesis. The polypeptide is Cytochrome b (MT-CYB) (Alectoris graeca (Rock partridge)).